A 664-amino-acid chain; its full sequence is Alkaline/neutral invertase C, mitochondrial (664 aa).

3 positions are modified to phosphoserine: S41, S125, and S657.

It belongs to the glycosyl hydrolase 100 family. Expressed in seedlings, roots and flowers.

The protein localises to the mitochondrion. It carries out the reaction Hydrolysis of terminal non-reducing beta-D-fructofuranoside residues in beta-D-fructofuranosides.. Its function is as follows. Mitochondrial invertase that cleaves sucrose into glucose and fructose and is involved in the regulation of aerial tissue development and floral transition. May be modulating hormone balance in relation to the radicle emergence. In Arabidopsis thaliana (Mouse-ear cress), this protein is Alkaline/neutral invertase C, mitochondrial.